A 521-amino-acid chain; its full sequence is Bifunctional dihydrofolate reductase-thymidylate synthase (521 aa).

The DHFR domain occupies 22 to 232 (AFSLVVAVDE…TKYYFEKLIP (211 aa)). Val26 is a binding site for substrate. Residues Ala28 and 34 to 40 (GIGDGRS) contribute to the NADP(+) site. Asp48 contacts substrate. NADP(+) contacts are provided by residues 78 to 80 (RKT) and 99 to 102 (LSST). Residues Ile154, Tyr160, and Thr178 each coordinate substrate. Residue 155 to 162 (GGGSVYAE) participates in NADP(+) binding. The segment at 237–521 (EEQYLSLVDR…YPPISMKMAV (285 aa)) is thymidylate synthase. Position 257 (Arg257) interacts with dUMP. Cys403 is an active-site residue. DUMP is bound by residues His404, 422–426 (QRSCD), Asn434, and 464–466 (HVY).

The protein in the N-terminal section; belongs to the dihydrofolate reductase family. This sequence in the C-terminal section; belongs to the thymidylate synthase family. As to quaternary structure, homodimer.

The enzyme catalyses (6S)-5,6,7,8-tetrahydrofolate + NADP(+) = 7,8-dihydrofolate + NADPH + H(+). The catalysed reaction is dUMP + (6R)-5,10-methylene-5,6,7,8-tetrahydrofolate = 7,8-dihydrofolate + dTMP. Its pathway is cofactor biosynthesis; tetrahydrofolate biosynthesis; 5,6,7,8-tetrahydrofolate from 7,8-dihydrofolate: step 1/1. Its function is as follows. Bifunctional enzyme. Involved in de novo dTMP biosynthesis. Key enzyme in folate metabolism. Catalyzes an essential reaction for de novo glycine and purine synthesis, DNA precursor synthesis, and for the conversion of dUMP to dTMP. In Trypanosoma cruzi, this protein is Bifunctional dihydrofolate reductase-thymidylate synthase.